The primary structure comprises 495 residues: L-2,4-diaminobutyrate decarboxylase (495 aa).

The residue at position 312 (lysine 312) is an N6-(pyridoxal phosphate)lysine.

The protein belongs to the group II decarboxylase family. Requires pyridoxal 5'-phosphate as cofactor.

The catalysed reaction is L-2,4-diaminobutanoate + H(+) = propane-1,3-diamine + CO2. Its pathway is siderophore biosynthesis; rhizobactin biosynthesis. In Rhizobium meliloti (strain 1021) (Ensifer meliloti), this protein is L-2,4-diaminobutyrate decarboxylase (rhbB).